Consider the following 647-residue polypeptide: Cartilage acidic protein 1 (647 aa).

The signal sequence occupies residues 1-30 (MMLPADFFVPVSKMMLLALLLSIIICCGGA). Residues 48-90 (DYDSNPTQLNYGVAITDVDNDGDFEVVVAGYNGPNLVLKYIKE) form an FG-GAP 1; atypical repeat. One copy of the FG-GAP 2; atypical repeat lies at 107–149 (YALRDRQGNAIGVAACDIDGDGREEIYFLNTNNAFSGIATYSD). One copy of the FG-GAP 3; atypical repeat lies at 285-335 (TGVDDVYQHGRGVALADFNRDGKVDIVYGNWNGPHRLFLQMNTNGKVRFRD). One copy of the FG-GAP 4; atypical repeat lies at 397–439 (GDASEPDGRGTGGAVTDFDGDGMLDLILSHGESMAQPLSVFKG). Positions 561-607 (DTDECIQFPFVCPREKPVCINTYGGYKCRPNRRCSRGFEPNEDGTAC) constitute an EGF-like domain. Disulfide bonds link Cys565-Cys579, Cys572-Cys588, and Cys594-Cys607.

It is found in the secreted. The protein localises to the extracellular space. The protein resides in the extracellular matrix. The protein is Cartilage acidic protein 1 (crtac1) of Xenopus tropicalis (Western clawed frog).